The following is a 1823-amino-acid chain: WD repeat-containing protein DDB_G0292056 (1823 aa).

The segment at 1-68 (MTYNNNNNYL…IGNSSGGGGV (68 aa)) is disordered. The span at 16-61 (TSTSTSTSTSTPTSTKTSPLNTSSSSNILKSNSRNPSPNNPTNIGN) shows a compositional bias: low complexity. WD repeat units lie at residues 138–177 (QSKW…YPLL), 182–222 (SHQR…KAVK), 228–267 (SHIL…QELN), 270–310 (VHSA…PKST), 312–354 (ITSN…YSTP), and 360–405 (GHTD…KDLF). Disordered stretches follow at residues 418-461 (PTTT…LLST), 530-562 (QPDD…NNNN), 649-687 (NITE…GFLK), 714-778 (IDIS…YRPG), 805-840 (ILTN…TNDQ), 883-940 (IPNN…SSTS), 966-996 (SSSS…NPPR), 1014-1058 (NNIT…NDNP), and 1122-1186 (QQLV…NGKS). Low complexity-rich tracts occupy residues 419 to 432 (TTTT…TTTT) and 440 to 461 (LNES…LLST). 2 stretches are compositionally biased toward low complexity: residues 654–680 (NNNN…NNNN) and 717–748 (SQQQ…QQQQ). Polar residues-rich tracts occupy residues 749–768 (FLTA…SPTS) and 827–840 (MNAS…TNDQ). 4 stretches are compositionally biased toward low complexity: residues 885–926 (NNNK…SSNN), 966–993 (SSSS…KNIN), 1014–1041 (NNIT…NRLN), and 1127–1183 (SSSP…NNGN). A WD 7 repeat occupies 1207 to 1250 (ANSYILSGKPVEEICKYNSELAEKENRKDLVKLWNTLGMITDSK). Disordered stretches follow at residues 1264–1307 (SHFG…LHQS), 1697–1725 (QQQP…HTHN), and 1764–1823 (PQQE…MFSN). The segment covering 1282-1293 (STGIASSTGSNS) has biased composition (low complexity). Positions 1710–1725 (MSGTSHYHQQQPHTHN) are enriched in polar residues.

The chain is WD repeat-containing protein DDB_G0292056 from Dictyostelium discoideum (Social amoeba).